The chain runs to 375 residues: MQLQFRSWMLAALTLLVVFLIFADISEIEEEIGNSGGRGTIRSAVNSLHSKSNRAEVVINGSSLPAVADRSNESLKHSIQPASSKWRHNQTLSLRIRKQILKFLDAEKDISVLKGTLKPGDIIHYIFDRDSTMNVSQNLYELLPRTSPLKNKHFQTCAIVGNSGVLLNSGCGQEIDTHSFVIRCNLAPVQEYARDVGLKTDLVTMNPSVIQRAFEDLVNATWREKLLQRLHGLNGSILWIPAFMARGGKERVEWVNALILKHHVNVRTAYPSLRLLHAVRGYWLTNKVHIKRPTTGLLMYTLATRFCNQIYLYGFWPFPLDQNQNPVKYHYYDSLKYGYTSQASPHTMPLEFKALKSLHEQGALKLTVGQCDGAT.

At 1 to 6 the chain is on the cytoplasmic side; sequence MQLQFR. The chain crosses the membrane as a helical; Signal-anchor for type II membrane protein span at residues 7-23; that stretch reads SWMLAALTLLVVFLIFA. Topologically, residues 24 to 375 are lumenal; it reads DISEIEEEIG…LTVGQCDGAT (352 aa). N60, N72, N89, and N134 each carry an N-linked (GlcNAc...) asparagine glycan. 2 disulfide bridges follow: C157–C307 and C171–C371. Residues N162 and N185 each contribute to the CMP-N-acetyl-beta-neuraminate site. 2 N-linked (GlcNAc...) asparagine glycosylation sites follow: N219 and N234. The CMP-N-acetyl-beta-neuraminate site is built by T294, T295, G296, W316, Y329, and H330. H346 acts as the Proton donor/acceptor in catalysis.

It belongs to the glycosyltransferase 29 family. Post-translationally, autopolysialylated. Autopolysialylation is not a prerequisite for the polysialylation acitity, but enhances the polysialylation acitity. In terms of tissue distribution, expressed only in newborn brain.

The protein localises to the golgi apparatus membrane. Its subcellular location is the secreted. The protein resides in the cell membrane. The catalysed reaction is [N-acetyl-alpha-D-neuraminosyl-(2-&gt;8)](n) + CMP-N-acetyl-beta-neuraminate = [N-acetyl-alpha-D-neuraminosyl-(2-&gt;8)](n+1) + CMP + H(+). Its pathway is protein modification; protein glycosylation. Functionally, catalyzes the transfer of a sialic acid from a CMP-linked sialic acid donor onto a terminal alpha-2,3-, alpha-2,6-, or alpha-2,8-linked sialic acid of an N-linked glycan acceptor through alpha-2,8-linkages. Therefore, participates in polysialic acid synthesis on various sialylated N-acetyllactosaminyl oligosaccharides (alpha-2,3-, alpha-2,6-, or alpha-2,8-linked sialic acid), including NCAM1, NCAM1 N-glycans, FETUB N-glycans, and to a lesser extent sialylparagloboside (SPG) and AHSG, which does not require the initial addition of an alpha 2,8-sialic acid. However, does not exhibit sialic acid-polymerase activity. Catalyzes polysialic acid synthesis in the hippocampal on NCAM1 and supports neurite outgrowth. ST8SIA2-mediated polysialylation influences on oligodendrocyte differentiation and may promote the integrity of myelin and axons. The sequence is that of Alpha-2,8-sialyltransferase 8B from Rattus norvegicus (Rat).